The primary structure comprises 438 residues: Glutaryl-CoA dehydrogenase, mitochondrial (438 aa).

The transit peptide at 1–44 (MALRGVSVQLLSRVPGLRVFRTWVSSAAQTEKVGRTQSQLAKSS) directs the protein to the mitochondrion. Substrate-binding positions include 138-139 (RS) and serine 186. Residues 177-186 (FGLTEPNSGS), serine 186, and 212-214 (WIT) each bind FAD. An N6-acetyllysine modification is found at lysine 240. 287 to 294 (FGCLNNGR) contributes to the substrate binding site. FAD is bound by residues arginine 319, glutamine 330, and 387 to 391 (DMLGG). Glutamate 414 (proton acceptor) is an active-site residue. Residue glycine 415 coordinates substrate. Residues threonine 416, 416–418 (THD), and phenylalanine 434 contribute to the FAD site.

The protein belongs to the acyl-CoA dehydrogenase family. In terms of assembly, homotetramer. FAD is required as a cofactor.

It is found in the mitochondrion matrix. The catalysed reaction is glutaryl-CoA + oxidized [electron-transfer flavoprotein] + 2 H(+) = (2E)-butenoyl-CoA + reduced [electron-transfer flavoprotein] + CO2. It participates in amino-acid metabolism; lysine degradation. It functions in the pathway amino-acid metabolism; tryptophan metabolism. In terms of biological role, catalyzes the oxidative decarboxylation of glutaryl-CoA to crotonyl-CoA and CO(2) in the degradative pathway of L-lysine, L-hydroxylysine, and L-tryptophan metabolism. It uses electron transfer flavoprotein as its electron acceptor. The polypeptide is Glutaryl-CoA dehydrogenase, mitochondrial (GCDH) (Macaca fascicularis (Crab-eating macaque)).